A 623-amino-acid chain; its full sequence is DNA mismatch repair protein MutL (623 aa).

A compositionally biased stretch (polar residues) spans 353 to 368; the sequence is AQQSAPRPANSYSPAS. Residues 353–389 are disordered; sequence AQQSAPRPANSYSPASWRTAPPAPRSEWSPQTAQTAH.

This sequence belongs to the DNA mismatch repair MutL/HexB family.

Functionally, this protein is involved in the repair of mismatches in DNA. It is required for dam-dependent methyl-directed DNA mismatch repair. May act as a 'molecular matchmaker', a protein that promotes the formation of a stable complex between two or more DNA-binding proteins in an ATP-dependent manner without itself being part of a final effector complex. In Brucella melitensis biotype 2 (strain ATCC 23457), this protein is DNA mismatch repair protein MutL.